The sequence spans 113 residues: UPF0342 protein SEQ_0993 (113 aa).

It belongs to the UPF0342 family.

This chain is UPF0342 protein SEQ_0993, found in Streptococcus equi subsp. equi (strain 4047).